The chain runs to 668 residues: DNA ligase (668 aa).

Residues 35-39, 84-85, and Glu-115 each bind NAD(+); these read DQEYD and SL. The N6-AMP-lysine intermediate role is filled by Lys-117. NAD(+) is bound by residues Arg-138, Glu-172, Lys-288, and Lys-312. Zn(2+)-binding residues include Cys-406, Cys-409, Cys-425, and Cys-430. Residues 589-668 form the BRCT domain; the sequence is KLEGPLKGLV…EEFFDKYGES (80 aa).

The protein belongs to the NAD-dependent DNA ligase family. LigA subfamily. Mg(2+) serves as cofactor. Mn(2+) is required as a cofactor.

It carries out the reaction NAD(+) + (deoxyribonucleotide)n-3'-hydroxyl + 5'-phospho-(deoxyribonucleotide)m = (deoxyribonucleotide)n+m + AMP + beta-nicotinamide D-nucleotide.. Functionally, DNA ligase that catalyzes the formation of phosphodiester linkages between 5'-phosphoryl and 3'-hydroxyl groups in double-stranded DNA using NAD as a coenzyme and as the energy source for the reaction. It is essential for DNA replication and repair of damaged DNA. This chain is DNA ligase, found in Petrotoga mobilis (strain DSM 10674 / SJ95).